Consider the following 349-residue polypeptide: Protein RecA (349 aa).

Position 65-72 (65-72 (GPESSGKT)) interacts with ATP.

It belongs to the RecA family.

The protein localises to the cytoplasm. Functionally, can catalyze the hydrolysis of ATP in the presence of single-stranded DNA, the ATP-dependent uptake of single-stranded DNA by duplex DNA, and the ATP-dependent hybridization of homologous single-stranded DNAs. It interacts with LexA causing its activation and leading to its autocatalytic cleavage. The protein is Protein RecA of Enterococcus faecium (Streptococcus faecium).